We begin with the raw amino-acid sequence, 465 residues long: Fumarate hydratase class II (465 aa).

Substrate-binding positions include 100 to 102, 131 to 134, 141 to 143, and T189; these read SGT, HPND, and SSN. The Proton donor/acceptor role is filled by H190. Residue S320 is part of the active site. Substrate is bound by residues S321 and 326–328; that span reads KVN.

Belongs to the class-II fumarase/aspartase family. Fumarase subfamily. As to quaternary structure, homotetramer.

The protein resides in the cytoplasm. It carries out the reaction (S)-malate = fumarate + H2O. It functions in the pathway carbohydrate metabolism; tricarboxylic acid cycle; (S)-malate from fumarate: step 1/1. Functionally, involved in the TCA cycle. Catalyzes the stereospecific interconversion of fumarate to L-malate. This Mesorhizobium japonicum (strain LMG 29417 / CECT 9101 / MAFF 303099) (Mesorhizobium loti (strain MAFF 303099)) protein is Fumarate hydratase class II.